A 196-amino-acid polypeptide reads, in one-letter code: MGLELPLVLGTSSVFRREQMERLGIAFQAASPDFDETPMLGESAPQTALRLAEGKARSLTGRFPGALIVGADQVAWCDGRQWGKPMNLANAQKMLMHLSGREIEFYSAVVLLNTVTGRMHRHIDKTVVVMRQLDELHILRYLEREPDAVYCSCAAKSEGLGALLIERIESTDPNALIGLPVFRLVDFLKNEGVDVL.

Asp-72 (proton acceptor) is an active-site residue.

The protein belongs to the Maf family. YceF subfamily. Requires a divalent metal cation as cofactor.

It localises to the cytoplasm. It catalyses the reaction N(7)-methyl-GTP + H2O = N(7)-methyl-GMP + diphosphate + H(+). In terms of biological role, nucleoside triphosphate pyrophosphatase that hydrolyzes 7-methyl-GTP (m(7)GTP). May have a dual role in cell division arrest and in preventing the incorporation of modified nucleotides into cellular nucleic acids. The chain is 7-methyl-GTP pyrophosphatase from Neisseria gonorrhoeae (strain ATCC 700825 / FA 1090).